We begin with the raw amino-acid sequence, 688 residues long: Homoaconitase, mitochondrial (688 aa).

The transit peptide at 1–19 (MALLYLSTRSSLKKTGARC) directs the protein to the mitochondrion. 3 residues coordinate [4Fe-4S] cluster: C346, C406, and C409.

The protein belongs to the aconitase/IPM isomerase family. [4Fe-4S] cluster is required as a cofactor.

The protein resides in the mitochondrion. It carries out the reaction (2R,3S)-homoisocitrate = cis-homoaconitate + H2O. It participates in amino-acid biosynthesis; L-lysine biosynthesis via AAA pathway; L-alpha-aminoadipate from 2-oxoglutarate: step 3/5. In terms of biological role, catalyzes the reversible hydration of cis-homoaconitate to (2R,3S)-homoisocitrate, a step in the alpha-aminoadipate pathway for lysine biosynthesis. This chain is Homoaconitase, mitochondrial (LYS4), found in Debaryomyces hansenii (strain ATCC 36239 / CBS 767 / BCRC 21394 / JCM 1990 / NBRC 0083 / IGC 2968) (Yeast).